Here is an 839-residue protein sequence, read N- to C-terminus: Probable beta-glucosidase I (839 aa).

The N-linked (GlcNAc...) asparagine glycan is linked to N197. The active site involves D225. The PA14 domain occupies 395 to 555 (DGKKGFSFRV…SQEELIAKAA (161 aa)).

This sequence belongs to the glycosyl hydrolase 3 family.

It is found in the secreted. The enzyme catalyses Hydrolysis of terminal, non-reducing beta-D-glucosyl residues with release of beta-D-glucose.. It participates in glycan metabolism; cellulose degradation. Its function is as follows. Beta-glucosidases are one of a number of cellulolytic enzymes involved in the degradation of cellulosic biomass. Catalyzes the last step releasing glucose from the inhibitory cellobiose. In Aspergillus terreus (strain NIH 2624 / FGSC A1156), this protein is Probable beta-glucosidase I (bglI).